A 409-amino-acid polypeptide reads, in one-letter code: MIKRYTCQNGVRIVLENNPTVRSVAIGVWIGTGSRHETPEINGISHFLEHMFFKGTSTKSAREIAESFDRIGGQVNAFTSKEYTCYYAKVLDEHANYALDVLADMFFHSTFDENELKKEKNVVYEEIKMYEDAPDDIVHDLLSKATYGNHSLGYPILGTEETLASFNGDSLRQYMHDYYTPDRVVISVAGNISDSFIKDVEKWFGSYEAKGKATGLEKPEFHTEKLTRKKETEQAHLCLGFKGLEVGHERIYDLIVLNNVLGGSMSSRLFQDVREDKGLAYSVYSYHSSYEDSGMLTIYGGTGANQLQQLSETIQETLATLKRDGITSKELENSKEQMKGSLMLSLESTNSKMSRNGKNELLLGKHKTLDEIINELNAVNLERVNGLARQLFTEDYALALISPSGNMPS.

Position 46 (histidine 46) interacts with Zn(2+). Glutamate 49 (proton acceptor) is an active-site residue. Positions 50 and 126 each coordinate Zn(2+).

This sequence belongs to the peptidase M16 family. The cofactor is Zn(2+).

This is an uncharacterized protein from Bacillus subtilis (strain 168).